Reading from the N-terminus, the 183-residue chain is Bifunctional protein PyrR (183 aa).

Substrate is bound by residues 46 to 47 (TR), Arg87, 107 to 115 (DDVIFSGRT), Arg140, and Val164. The PRPP-binding motif lies at 103–115 (VVLVDDVIFSGRT).

The protein belongs to the purine/pyrimidine phosphoribosyltransferase family. PyrR subfamily.

The catalysed reaction is UMP + diphosphate = 5-phospho-alpha-D-ribose 1-diphosphate + uracil. In terms of biological role, regulates the transcription of the pyrimidine nucleotide (pyr) operon in response to exogenous pyrimidines. Functionally, also displays a weak uracil phosphoribosyltransferase activity which is not physiologically significant. The protein is Bifunctional protein PyrR of Thermosynechococcus vestitus (strain NIES-2133 / IAM M-273 / BP-1).